The chain runs to 204 residues: Putative t-SNARE coiled-coil homology domain-containing protein L657 (204 aa).

2 t-SNARE coiled-coil homology domains span residues S9–V71 and D140–T202. Residues V159 to I181 adopt a coiled-coil conformation.

The polypeptide is Putative t-SNARE coiled-coil homology domain-containing protein L657 (Acanthamoeba polyphaga (Amoeba)).